Here is a 133-residue protein sequence, read N- to C-terminus: Capsid protein (133 aa).

Belongs to the Leviviricetes capsid protein family. As to quaternary structure, homodimer. The capsid protein dimer binds to the viral RNA via an operator hairpin, but also many other RNA sequences in the viral genome.

It localises to the virion. Capsid protein self-assembles to form an icosahedral capsid with a T=3 symmetry, about 26 nm in diameter, and consisting of 89 capsid proteins dimers (178 capsid proteins). Involved in viral genome encapsidation through the interaction between a capsid protein dimer and the multiple packaging signals present in the RNA genome. Binding of the capsid proteins to the viral RNA induces a conformational change required for efficient T=3 shell formation. The capsid also contains 1 copy of the A2 maturation protein. Its function is as follows. Acts as a translational repressor of viral replicase synthesis late in infection. This latter function is the result of capsid protein interaction with an RNA hairpin which contains the replicase ribosome-binding site. The protein is Capsid protein of Escherichia coli.